The sequence spans 137 residues: Large ribosomal subunit protein uL16 (137 aa).

This sequence belongs to the universal ribosomal protein uL16 family. In terms of assembly, part of the 50S ribosomal subunit.

In terms of biological role, binds 23S rRNA and is also seen to make contacts with the A and possibly P site tRNAs. The sequence is that of Large ribosomal subunit protein uL16 from Ruegeria sp. (strain TM1040) (Silicibacter sp.).